The chain runs to 928 residues: TBC1 domain family member 2A (928 aa).

The residue at position 1 (M1) is an N-acetylmethionine. A compositionally biased stretch (low complexity) spans 1 to 19; it reads MEGAGENAPESSSSAPGSE. Residues 1 to 39 are disordered; sequence MEGAGENAPESSSSAPGSEESARDPQVPPPEEESGDCAR. The tract at residues 1–169 is interaction with CADH1; the sequence is MEGAGENAPE…AGNGPVLHLE (169 aa). A PH domain is found at 45 to 142; sequence PKKLCGYLSK…WLQQLQMKRW (98 aa). Positions 225 to 275 are disordered; that stretch reads NKQAQGTGHEPPGEDSPQSGEPQREEQPLASDASTPGREPEDSPKPAPKPS. Residues 295–433 form an interaction with RAC1 region; it reads SEGITRNRTA…KVTQDFTHPP (139 aa). The stretch at 298–416 forms a coiled coil; that stretch reads ITRNRTAQEK…LMDKNHAKQQ (119 aa). Phosphoserine is present on S436. The Rab-GAP TBC domain occupies 625-817; it reads GVPREHRPRV…RVWDAFLYEG (193 aa). Residues 875 to 913 are a coiled coil; that stretch reads MKQLRQLRMVHRERLEAELRELEQLKAEYLERRASRRRA. 2 positions are modified to phosphoserine: S915 and S920.

As to quaternary structure, interacts with activated RAC1 and CDH1. In terms of tissue distribution, expressed in a broad range of tissues, especially in kidney, liver, lung and placenta. Also expressed in keratinocytes and epithelia-containing organs. Isoform 2 is differentially expressed in prostate normal and cancer cells (at protein level).

Its subcellular location is the cytoplasm. The protein localises to the cytoplasmic vesicle. It is found in the cell junction. In terms of biological role, acts as a GTPase-activating protein for RAB7A. Signal effector acting as a linker between RAC1 and RAB7A, leading to RAB7A inactivation and subsequent inhibition of cadherin degradation and reduced cell-cell adhesion. This Homo sapiens (Human) protein is TBC1 domain family member 2A (TBC1D2).